The sequence spans 264 residues: Thiazole synthase (264 aa).

Residue Lys106 is the Schiff-base intermediate with DXP of the active site. 1-deoxy-D-xylulose 5-phosphate-binding positions include Gly167, 193–194 (AG), and 215–216 (NT).

Belongs to the ThiG family. As to quaternary structure, homotetramer. Forms heterodimers with either ThiH or ThiS.

It is found in the cytoplasm. The enzyme catalyses [ThiS sulfur-carrier protein]-C-terminal-Gly-aminoethanethioate + 2-iminoacetate + 1-deoxy-D-xylulose 5-phosphate = [ThiS sulfur-carrier protein]-C-terminal Gly-Gly + 2-[(2R,5Z)-2-carboxy-4-methylthiazol-5(2H)-ylidene]ethyl phosphate + 2 H2O + H(+). It functions in the pathway cofactor biosynthesis; thiamine diphosphate biosynthesis. Catalyzes the rearrangement of 1-deoxy-D-xylulose 5-phosphate (DXP) to produce the thiazole phosphate moiety of thiamine. Sulfur is provided by the thiocarboxylate moiety of the carrier protein ThiS. In vitro, sulfur can be provided by H(2)S. The sequence is that of Thiazole synthase from Xanthomonas axonopodis pv. citri (strain 306).